We begin with the raw amino-acid sequence, 280 residues long: Hydroxyethylthiazole kinase (280 aa).

Met-50 contributes to the substrate binding site. ATP is bound by residues Lys-125 and Thr-178. Gly-205 provides a ligand contact to substrate.

Belongs to the Thz kinase family. The cofactor is Mg(2+).

It catalyses the reaction 5-(2-hydroxyethyl)-4-methylthiazole + ATP = 4-methyl-5-(2-phosphooxyethyl)-thiazole + ADP + H(+). It participates in cofactor biosynthesis; thiamine diphosphate biosynthesis; 4-methyl-5-(2-phosphoethyl)-thiazole from 5-(2-hydroxyethyl)-4-methylthiazole: step 1/1. Its function is as follows. Catalyzes the phosphorylation of the hydroxyl group of 4-methyl-5-beta-hydroxyethylthiazole (THZ). This Lacticaseibacillus paracasei (strain ATCC 334 / BCRC 17002 / CCUG 31169 / CIP 107868 / KCTC 3260 / NRRL B-441) (Lactobacillus paracasei) protein is Hydroxyethylthiazole kinase.